Here is a 428-residue protein sequence, read N- to C-terminus: 3-oxo-tetronate kinase (428 aa).

Residues serine 267, 365–368 (GGET), and glycine 409 each bind ATP.

The protein belongs to the four-carbon acid sugar kinase family.

The catalysed reaction is 3-dehydro-L-erythronate + ATP = 3-dehydro-4-O-phospho-L-erythronate + ADP + H(+). It carries out the reaction 3-dehydro-D-erythronate + ATP = 3-dehydro-4-O-phospho-D-erythronate + ADP + H(+). In terms of biological role, catalyzes the ATP-dependent phosphorylation of 3-oxo-tetronate to 3-oxo-tetronate 4-phosphate. The chain is 3-oxo-tetronate kinase from Burkholderia multivorans (strain ATCC 17616 / 249).